The sequence spans 327 residues: o-succinylbenzoate synthase (327 aa).

The active-site Proton donor is lysine 110. Aspartate 138, glutamate 165, and aspartate 188 together coordinate Mg(2+). Lysine 212 (proton acceptor) is an active-site residue.

This sequence belongs to the mandelate racemase/muconate lactonizing enzyme family. MenC type 1 subfamily. A divalent metal cation serves as cofactor.

The enzyme catalyses (1R,6R)-6-hydroxy-2-succinyl-cyclohexa-2,4-diene-1-carboxylate = 2-succinylbenzoate + H2O. The protein operates within quinol/quinone metabolism; 1,4-dihydroxy-2-naphthoate biosynthesis; 1,4-dihydroxy-2-naphthoate from chorismate: step 4/7. It functions in the pathway quinol/quinone metabolism; menaquinone biosynthesis. Its function is as follows. Converts 2-succinyl-6-hydroxy-2,4-cyclohexadiene-1-carboxylate (SHCHC) to 2-succinylbenzoate (OSB). The sequence is that of o-succinylbenzoate synthase from Mycobacterium marinum (strain ATCC BAA-535 / M).